The primary structure comprises 259 residues: Tryptophan synthase alpha chain (259 aa).

Catalysis depends on proton acceptor residues glutamate 52 and aspartate 63.

Belongs to the TrpA family. In terms of assembly, tetramer of two alpha and two beta chains.

The enzyme catalyses (1S,2R)-1-C-(indol-3-yl)glycerol 3-phosphate + L-serine = D-glyceraldehyde 3-phosphate + L-tryptophan + H2O. Its pathway is amino-acid biosynthesis; L-tryptophan biosynthesis; L-tryptophan from chorismate: step 5/5. Functionally, the alpha subunit is responsible for the aldol cleavage of indoleglycerol phosphate to indole and glyceraldehyde 3-phosphate. The protein is Tryptophan synthase alpha chain of Streptococcus sanguinis (strain SK36).